A 910-amino-acid polypeptide reads, in one-letter code: Staphylococcal nuclease domain-containing protein 1 (910 aa).

Alanine 2 is modified (N-acetylalanine). TNase-like domains are found at residues 18-166 (TVQR…MWSE), 193-328 (KPVN…IWRD), and 341-496 (KQFV…LHSK). The residue at position 103 (threonine 103) is a Phosphothreonine. Position 193 is an N6-acetyllysine (lysine 193). Threonine 240 carries the phosphothreonine modification. Short sequence motifs (nuclear localization signal) lie at residues 321–325 (RRLRI) and 388–392 (KKLRP). At serine 426 the chain carries Phosphoserine. Lysine 513 participates in a covalent cross-link: Glycyl lysine isopeptide (Lys-Gly) (interchain with G-Cter in SUMO2). One can recognise a TNase-like 4 domain in the interval 525-660 (GRSEAVVEYV…KQKKEKVWAH (136 aa)). Residue lysine 641 is modified to N6-acetyllysine. Serine 645 bears the Phosphoserine mark. Positions 729 to 787 (APRRGEFCIAKFVDGEWYRARVEKVESPAKIHVFYIDYGNREVLPSTRLGTLSPAFSTR) constitute a Tudor domain. Threonine 779 is modified (phosphothreonine). Phosphoserine is present on residues serine 781, serine 785, and serine 909.

In terms of assembly, forms a ternary complex with STAT6 and POLR2A. Associates with the RNA-induced silencing complex (RISC). Interacts with the RISC components AGO2, FMR1 and TNRC6A. Interacts with GTF2E1 and GTF2E2. Interacts with PIM1. Interacts with STAT5. Interacts with SYT11 (via C2 2 domain); the interaction with SYT11 is direct. As to quaternary structure, (Microbial infection) Interacts with EAV NSP1. Binds to acidic transactivation domain of EBNA2. Interacts with SARS-CoV-2 NSP9. In terms of processing, phosphorylated by PIM1 in vitro. In terms of tissue distribution, ubiquitously expressed.

The protein localises to the cytoplasm. The protein resides in the nucleus. It is found in the melanosome. It catalyses the reaction Endonucleolytic cleavage to nucleoside 3'-phosphates and 3'-phosphooligonucleotide end-products.. Functionally, endonuclease that mediates miRNA decay of both protein-free and AGO2-loaded miRNAs. As part of its function in miRNA decay, regulates mRNAs involved in G1-to-S phase transition. Functions as a bridging factor between STAT6 and the basal transcription factor. Plays a role in PIM1 regulation of MYB activity. Functions as a transcriptional coactivator for STAT5. (Microbial infection) Functions as a transcriptional coactivator for the Epstein-Barr virus nuclear antigen 2 (EBNA2). Its function is as follows. (Microbial infection) Promotes SARS-CoV-2 RNA synthesis by binding to negative-sense RNA and the viral protein nsp9. The protein is Staphylococcal nuclease domain-containing protein 1 (SND1) of Homo sapiens (Human).